Consider the following 160-residue polypeptide: Dihydrofolate reductase (160 aa).

The region spanning 2 to 159 (TFSLIVATTL…YDCRFLILTR (158 aa)) is the DHFR domain. Ile6 contributes to the substrate binding site. Residues Ala8 and 14 to 20 (VIGKDNQ) each bind NADP(+). Asp28 serves as a coordination point for substrate. An NADP(+)-binding site is contributed by 46–47 (KT). Substrate contacts are provided by Arg53 and Arg58. Residues 64–65 (SR) and 96–103 (GGGELFKQ) each bind NADP(+). Residue Thr114 coordinates substrate.

This sequence belongs to the dihydrofolate reductase family.

It catalyses the reaction (6S)-5,6,7,8-tetrahydrofolate + NADP(+) = 7,8-dihydrofolate + NADPH + H(+). It participates in cofactor biosynthesis; tetrahydrofolate biosynthesis; 5,6,7,8-tetrahydrofolate from 7,8-dihydrofolate: step 1/1. Key enzyme in folate metabolism. Catalyzes an essential reaction for de novo glycine and purine synthesis, and for DNA precursor synthesis. The polypeptide is Dihydrofolate reductase (folA) (Haemophilus influenzae (strain ATCC 51907 / DSM 11121 / KW20 / Rd)).